A 35-amino-acid chain; its full sequence is Photosystem II reaction center protein T (35 aa).

Residues 3–23 (ALVYTFLLIGTLGIIFFAIFF) traverse the membrane as a helical segment.

It belongs to the PsbT family. PSII is composed of 1 copy each of membrane proteins PsbA, PsbB, PsbC, PsbD, PsbE, PsbF, PsbH, PsbI, PsbJ, PsbK, PsbL, PsbM, PsbT, PsbY, PsbZ, Psb30/Ycf12, at least 3 peripheral proteins of the oxygen-evolving complex and a large number of cofactors. It forms dimeric complexes.

The protein localises to the plastid. It localises to the chloroplast thylakoid membrane. In terms of biological role, found at the monomer-monomer interface of the photosystem II (PS II) dimer, plays a role in assembly and dimerization of PSII. PSII is a light-driven water plastoquinone oxidoreductase, using light energy to abstract electrons from H(2)O, generating a proton gradient subsequently used for ATP formation. In Coleochaete orbicularis (Charophycean green alga), this protein is Photosystem II reaction center protein T.